We begin with the raw amino-acid sequence, 542 residues long: Pre-mRNA-splicing factor 38B (542 aa).

The span at 1–12 (MANNSPALTGNS) shows a compositional bias: polar residues. Residues 1-24 (MANNSPALTGNSQPQHQAAAAVVQ) form a disordered region. Position 2 is an N-acetylalanine (alanine 2). Phosphoserine is present on serine 5. A compositionally biased stretch (low complexity) spans 13–24 (QPQHQAAAAVVQ). An N6-acetyllysine modification is found at lysine 227. The disordered stretch occupies residues 232 to 542 (QIKTRPRKIK…KEHKNKDETV (311 aa)). The segment covering 243–255 (DGKEGVEEIDRHI) has biased composition (basic and acidic residues). Residues 256-284 (ERRRSRSPRRSLSPRRSPRRSRSRSHHRD) show a composition bias toward basic residues. Residues serine 288, serine 290, serine 318, and serine 320 each carry the phosphoserine modification. Basic and acidic residues predominate over residues 291-327 (FDRELEREKERQRLEREAKEREKERRRSRSLDRGLDR). Residues 292–323 (DRELEREKERQRLEREAKEREKERRRSRSLDR) are a coiled coil. Residues 328–344 (RRSRSRERHRSRSRSRD) show a composition bias toward basic residues. Positions 345 to 418 (RKGDRRDRDR…DRRHRDDKKE (74 aa)) are enriched in basic and acidic residues. Basic residues predominate over residues 419–448 (SKKKHSRSRSRERKHRSRSRSRNAGKRSRS). Residue serine 446 is modified to Phosphoserine. The segment covering 449–466 (RSKDKASKHKNESKEKSN) has biased composition (basic and acidic residues). Phosphoserine occurs at positions 471, 473, and 479. 2 stretches are compositionally biased toward basic and acidic residues: residues 479 to 492 (SVEK…PSRE) and 499 to 522 (RSQD…DHQR). Phosphoserine is present on residues serine 523, serine 525, and serine 530. Basic and acidic residues predominate over residues 530-542 (SQEKEHKNKDETV).

This sequence belongs to the PRP38 family.

It localises to the nucleus. May be required for pre-mRNA splicing. The chain is Pre-mRNA-splicing factor 38B (Prpf38b) from Rattus norvegicus (Rat).